A 939-amino-acid polypeptide reads, in one-letter code: Valine--tRNA ligase (939 aa).

The short motif at 47-57 (PNVTGILHMGH) is the 'HIGH' region element. Residues 563–567 (KLSKS) carry the 'KMSKS' region motif. An ATP-binding site is contributed by K566. Positions 874–939 (EHLAKERVRL…QSILDKLASL (66 aa)) form a coiled coil.

It belongs to the class-I aminoacyl-tRNA synthetase family. ValS type 1 subfamily. As to quaternary structure, monomer.

It is found in the cytoplasm. It catalyses the reaction tRNA(Val) + L-valine + ATP = L-valyl-tRNA(Val) + AMP + diphosphate. Catalyzes the attachment of valine to tRNA(Val). As ValRS can inadvertently accommodate and process structurally similar amino acids such as threonine, to avoid such errors, it has a 'posttransfer' editing activity that hydrolyzes mischarged Thr-tRNA(Val) in a tRNA-dependent manner. The sequence is that of Valine--tRNA ligase from Chlamydia trachomatis serovar L2 (strain ATCC VR-902B / DSM 19102 / 434/Bu).